Consider the following 865-residue polypeptide: Armadillo repeat-containing protein 2 (865 aa).

Disordered regions lie at residues 39 to 75 (TVRT…FSVH) and 214 to 243 (SVPF…DQSR). The segment covering 60–75 (SSRTPENRPPSSFSVH) has biased composition (polar residues). ARM repeat units follow at residues 261 to 300 (IEVD…HALE), 303 to 343 (NMLG…ALKV), 362 to 402 (EKND…TIKF), 407 to 448 (PEFL…HLLV), 461 to 502 (PLAR…KLTS), 505 to 546 (DCCV…NLTA), 550 to 587 (QARE…GEGD), 589 to 614 (RPEA…NLAI), 617 to 660 (GVGP…NLSY), 662 to 703 (KVKN…NLSQ), 705 to 744 (HDIC…NLTV), and 746 to 788 (RDKR…NFSE).

In terms of biological role, required for sperm flagellum axoneme organization and function. Involved in axonemal central pair complex assembly and/or stability. The chain is Armadillo repeat-containing protein 2 from Bos taurus (Bovine).